Here is a 331-residue protein sequence, read N- to C-terminus: Ketol-acid reductoisomerase (NADP(+)) (331 aa).

One can recognise a KARI N-terminal Rossmann domain in the interval 2–181 (LEKYYDKDAD…GATRAVVFET (180 aa)). Residues 25 to 28 (YGSQ), Arg-48, Ser-52, and 82 to 85 (DEQQ) contribute to the NADP(+) site. Residue His-107 is part of the active site. Gly-133 contributes to the NADP(+) binding site. The KARI C-terminal knotted domain occupies 182–327 (SFREETETDL…KEIRATMPQF (146 aa)). Residues Asp-190, Glu-194, Glu-226, and Glu-230 each contribute to the Mg(2+) site. Residue Ser-251 participates in substrate binding.

The protein belongs to the ketol-acid reductoisomerase family. Requires Mg(2+) as cofactor.

It carries out the reaction (2R)-2,3-dihydroxy-3-methylbutanoate + NADP(+) = (2S)-2-acetolactate + NADPH + H(+). It catalyses the reaction (2R,3R)-2,3-dihydroxy-3-methylpentanoate + NADP(+) = (S)-2-ethyl-2-hydroxy-3-oxobutanoate + NADPH + H(+). The protein operates within amino-acid biosynthesis; L-isoleucine biosynthesis; L-isoleucine from 2-oxobutanoate: step 2/4. Its pathway is amino-acid biosynthesis; L-valine biosynthesis; L-valine from pyruvate: step 2/4. Its function is as follows. Involved in the biosynthesis of branched-chain amino acids (BCAA). Catalyzes an alkyl-migration followed by a ketol-acid reduction of (S)-2-acetolactate (S2AL) to yield (R)-2,3-dihydroxy-isovalerate. In the isomerase reaction, S2AL is rearranged via a Mg-dependent methyl migration to produce 3-hydroxy-3-methyl-2-ketobutyrate (HMKB). In the reductase reaction, this 2-ketoacid undergoes a metal-dependent reduction by NADPH to yield (R)-2,3-dihydroxy-isovalerate. The sequence is that of Ketol-acid reductoisomerase (NADP(+)) from Methanospirillum hungatei JF-1 (strain ATCC 27890 / DSM 864 / NBRC 100397 / JF-1).